Reading from the N-terminus, the 290-residue chain is Nitrogenase iron protein 2 (290 aa).

ATP is bound at residue 10 to 17 (GKGGIGKS). Cys98 contributes to the [4Fe-4S] cluster binding site. An ADP-ribosylarginine; by dinitrogenase reductase ADP-ribosyltransferase modification is found at Arg101. Cys133 contacts [4Fe-4S] cluster.

This sequence belongs to the NifH/BchL/ChlL family. As to quaternary structure, homodimer. It depends on [4Fe-4S] cluster as a cofactor. The reversible ADP-ribosylation of Arg-101 inactivates the nitrogenase reductase and regulates nitrogenase activity.

It carries out the reaction N2 + 8 reduced [2Fe-2S]-[ferredoxin] + 16 ATP + 16 H2O = H2 + 8 oxidized [2Fe-2S]-[ferredoxin] + 2 NH4(+) + 16 ADP + 16 phosphate + 6 H(+). Its function is as follows. The key enzymatic reactions in nitrogen fixation are catalyzed by the nitrogenase complex, which has 2 components: the iron protein (component 2) and a component 1 which is either a molybdenum-iron protein, a vanadium-iron, or an iron-iron protein. The polypeptide is Nitrogenase iron protein 2 (vnfH) (Azotobacter vinelandii).